The sequence spans 72 residues: MMKLTCVLIIAVLFLTACQLTTAETRDEYRAVRSSDEVRNSRSCSGSGYGCKNTPCCAGLTCRGPRQGPICL.

A signal peptide spans 1–23; sequence MMKLTCVLIIAVLFLTACQLTTA. Residues 24-42 constitute a propeptide that is removed on maturation; that stretch reads ETRDEYRAVRSSDEVRNSR. 3 disulfides stabilise this stretch: C44–C57, C51–C62, and C56–C71.

It belongs to the conotoxin O1 superfamily. As to expression, expressed by the venom duct.

It localises to the secreted. This is Conotoxin VnMKLT2-011 from Conus ventricosus (Mediterranean cone).